A 230-amino-acid polypeptide reads, in one-letter code: Thymidylate kinase (230 aa).

ATP is bound at residue 20–27 (GGEGAGKS).

Belongs to the thymidylate kinase family.

It carries out the reaction dTMP + ATP = dTDP + ADP. In terms of biological role, phosphorylation of dTMP to form dTDP in both de novo and salvage pathways of dTTP synthesis. This chain is Thymidylate kinase, found in Rhodopseudomonas palustris (strain ATCC BAA-98 / CGA009).